Reading from the N-terminus, the 252-residue chain is 5'-nucleotidase SurE (252 aa).

Residues D8, D9, S39, and N91 each contribute to the a divalent metal cation site.

This sequence belongs to the SurE nucleotidase family. A divalent metal cation is required as a cofactor.

The protein resides in the cytoplasm. The enzyme catalyses a ribonucleoside 5'-phosphate + H2O = a ribonucleoside + phosphate. Its function is as follows. Nucleotidase that shows phosphatase activity on nucleoside 5'-monophosphates. The chain is 5'-nucleotidase SurE from Paraburkholderia xenovorans (strain LB400).